A 385-amino-acid polypeptide reads, in one-letter code: Beta sliding clamp (385 aa).

This sequence belongs to the beta sliding clamp family. In terms of assembly, forms a ring-shaped head-to-tail homodimer around DNA which binds and tethers DNA polymerases and other proteins to the DNA. The DNA replisome complex has a single clamp-loading complex (3 tau and 1 each of delta, delta', psi and chi subunits) which binds 3 Pol III cores (1 core on the leading strand and 2 on the lagging strand) each with a beta sliding clamp dimer. Additional proteins in the replisome are other copies of gamma, psi and chi, Ssb, DNA helicase and RNA primase.

Its subcellular location is the cytoplasm. Its function is as follows. Confers DNA tethering and processivity to DNA polymerases and other proteins. Acts as a clamp, forming a ring around DNA (a reaction catalyzed by the clamp-loading complex) which diffuses in an ATP-independent manner freely and bidirectionally along dsDNA. Initially characterized for its ability to contact the catalytic subunit of DNA polymerase III (Pol III), a complex, multichain enzyme responsible for most of the replicative synthesis in bacteria; Pol III exhibits 3'-5' exonuclease proofreading activity. The beta chain is required for initiation of replication as well as for processivity of DNA replication. The protein is Beta sliding clamp (dnaN) of Borreliella burgdorferi (strain ATCC 35210 / DSM 4680 / CIP 102532 / B31) (Borrelia burgdorferi).